The chain runs to 129 residues: Small ribosomal subunit protein uS11 (129 aa).

The protein belongs to the universal ribosomal protein uS11 family. In terms of assembly, part of the 30S ribosomal subunit. Interacts with proteins S7 and S18. Binds to IF-3.

Functionally, located on the platform of the 30S subunit, it bridges several disparate RNA helices of the 16S rRNA. Forms part of the Shine-Dalgarno cleft in the 70S ribosome. The chain is Small ribosomal subunit protein uS11 from Phocaeicola vulgatus (strain ATCC 8482 / DSM 1447 / JCM 5826 / CCUG 4940 / NBRC 14291 / NCTC 11154) (Bacteroides vulgatus).